We begin with the raw amino-acid sequence, 464 residues long: NADH-quinone oxidoreductase subunit N (464 aa).

Helical transmembrane passes span 5-25, 31-51, 63-83, 96-116, 117-137, 152-172, 188-208, 242-262, 286-303, 312-332, 358-378, 393-415, and 436-456; these read MLLALLPLLVLFGGSITVLFL, LLSAAMCAVVAAGFAWWPASL, LFARGCLTLWALLGAATCLLS, EYAALTLFAVLGMAILSASTS, LVSLFLGLESMTLAFYVLIAV, LLPGFLASALLAFGIALVYAA, GAPMPSIALLGWTLIMAAAAF, VFAVLLGSAPLALIVPLRPLL, MLAYSSVVHMGYLVLAVL, AGLFYLLTYSAATVGTFGLLA, AVLLTGLLLSLAGFPPLAGFM, VGLVVLALLSSLISCYYYLRPVL, and LIFVLCAGVTLVAGLYPGPFF.

This sequence belongs to the complex I subunit 2 family. In terms of assembly, NDH-1 is composed of 14 different subunits. Subunits NuoA, H, J, K, L, M, N constitute the membrane sector of the complex.

The protein resides in the cell inner membrane. It carries out the reaction a quinone + NADH + 5 H(+)(in) = a quinol + NAD(+) + 4 H(+)(out). Functionally, NDH-1 shuttles electrons from NADH, via FMN and iron-sulfur (Fe-S) centers, to quinones in the respiratory chain. The immediate electron acceptor for the enzyme in this species is believed to be ubiquinone. Couples the redox reaction to proton translocation (for every two electrons transferred, four hydrogen ions are translocated across the cytoplasmic membrane), and thus conserves the redox energy in a proton gradient. The sequence is that of NADH-quinone oxidoreductase subunit N from Syntrophotalea carbinolica (strain DSM 2380 / NBRC 103641 / GraBd1) (Pelobacter carbinolicus).